A 513-amino-acid polypeptide reads, in one-letter code: Flavonoid 3'-monooxygenase (513 aa).

The chain crosses the membrane as a helical span at residues 1-21; sequence MATLFLTILLATVLFLILRIF. At 22 to 513 the chain is on the cytoplasmic side; that stretch reads SHRRNRSHNN…APNVYGLGSG (492 aa). A heme-binding site is contributed by C445.

This sequence belongs to the cytochrome P450 family. Heme serves as cofactor. High expression in siliques and to a lower extent in stems, flowers and senescing leaves.

The protein localises to the endoplasmic reticulum membrane. The catalysed reaction is a 3'-unsubstituted flavone + reduced [NADPH--hemoprotein reductase] + O2 = a 3'-hydroxyflavone + oxidized [NADPH--hemoprotein reductase] + H2O + H(+). Its pathway is secondary metabolite biosynthesis; flavonoid biosynthesis. In terms of biological role, catalyzes the 3'-hydroxylation of the flavonoid B-ring to the 3',4'-hydroxylated state. Convert naringenin to eriodictyol and dihydrokaempferol to dihydroquercetin. The polypeptide is Flavonoid 3'-monooxygenase (CYP75B1) (Arabidopsis thaliana (Mouse-ear cress)).